Reading from the N-terminus, the 413-residue chain is Intracellular hyaluronan-binding protein 4 (413 aa).

Phosphoserine occurs at positions 7 and 36. The stretch at 40-64 forms a coiled coil; the sequence is DILREAERRRQQQLQRKRRDEAAAA. The interval 42-206 is disordered; it reads LREAERRRQQ…RGGPGNRVFD (165 aa). Residues 62 to 82 show a composition bias toward low complexity; it reads AAAAGAGPRGGRSPAGASGHR. Position 70 is an omega-N-methylarginine (Arg70). Phosphoserine is present on Ser74. Over residues 87–97 the composition is skewed to basic and acidic residues; sequence GRRESQKERKS. Ser108 carries the phosphoserine modification. The span at 139 to 182 shows a compositional bias: basic and acidic residues; the sequence is MLERAERRSYREYRPYETERQADFTAEKFPDEKPGDRFDRDRPL. Residues 184–201 show a composition bias toward gly residues; that stretch reads GRGGPRGGMRGRGRGGPG. Residues Lys213 and Lys276 each participate in a glycyl lysine isopeptide (Lys-Gly) (interchain with G-Cter in SUMO1); alternate cross-link. Residues Lys213 and Lys276 each participate in a glycyl lysine isopeptide (Lys-Gly) (interchain with G-Cter in SUMO2); alternate cross-link. The segment at 227 to 320 is disordered; it reads VRTEDNMGGC…IRKPESTVPS (94 aa). Basic and acidic residues predominate over residues 294 to 315; it reads DEWKNLQEQTRPKPEFNIRKPE. Lys336 participates in a covalent cross-link: Glycyl lysine isopeptide (Lys-Gly) (interchain with G-Cter in SUMO1); alternate. Residue Lys336 forms a Glycyl lysine isopeptide (Lys-Gly) (interchain with G-Cter in SUMO2); alternate linkage. Phosphothreonine; by PKC is present on residues Thr354 and Thr375. A disordered region spans residues 360–413; it reads NFGNLPRPGRGARGGTRGGRGRIRRAENYGPRAEVVMQDVAPNPDDPEDFPALS. The segment covering 404 to 413 has biased composition (acidic residues); the sequence is DDPEDFPALS.

The protein belongs to the SERBP1-HABP4 family. In terms of assembly, associates with ribosomes; promoting ribosome stabilization. Interacts with EEF2/eEF2; promoting ribosome stabilization. Interacts with FMR1. Interacts with FXR1 and FXR2. Interacts with CHD3 (via C-terminus). Interacts (via C-terminus) with RACK1. Interacts with p53/TP53. Interacts (via N-terminus) with SRSF9; this interaction is direct. Interacts with SYNCRIP; this interaction is direct. Interacts with MEF2C (via N-terminus); this interaction decreases DNA-binding activity of MEF2C in myocardial cells in response to mechanical stress. Interacts with PRMT1 (via N-terminus). Interacts with SPIN1. In terms of processing, methylated. Methylation is decreased by phorbol 12-myristate 13-acetate (PMA)-activated PKC, in vitro. Post-translationally, phosphorylated by phorbol 12-myristate 13-acetate (PMA)-activated PKC isoforms at Thr-354 and Thr-375. As to expression, highly expressed in brain, heart, and kidney, and moderately expressed in skeletal muscle. Also expressed in a variety of tumor cell lines and in activated but not resting leukocytes.

It is found in the nucleus. It localises to the cytoplasm. Its subcellular location is the stress granule. The protein resides in the sarcoplasm. The protein localises to the nuclear body. It is found in the nucleolus. It localises to the nucleus speckle. Its subcellular location is the cajal body. The protein resides in the gem. Ribosome-binding protein that promotes ribosome hibernation, a process during which ribosomes are stabilized in an inactive state and preserved from proteasomal degradation. Acts via its association with EEF2/eEF2 factor at the A-site of the ribosome, promoting ribosome stabilization in an inactive state compatible with storage. Plays a key role in ribosome hibernation in the mature oocyte by promoting ribosome stabilization. Ribosomes, which are produced in large quantities during oogenesis, are stored and translationally repressed in the oocyte and early embryo. Also binds RNA, regulating transcription and pre-mRNA splicing. Binds (via C-terminus) to poly(U) RNA. Seems to play a role in PML-nuclear bodies formation. Negatively regulates DNA-binding activity of the transcription factor MEF2C in myocardial cells in response to mechanical stress. This chain is Intracellular hyaluronan-binding protein 4, found in Homo sapiens (Human).